We begin with the raw amino-acid sequence, 261 residues long: uncharacterized protein (261 aa).

An N-terminal signal peptide occupies residues 1–20 (MKIQVMLIIIFVGIFTICLA). 2 N-linked (GlcNAc...) asparagine; by host glycosylation sites follow: Asn-22 and Asn-27.

It is found in the secreted. This is an uncharacterized protein from Acanthamoeba polyphaga (Amoeba).